We begin with the raw amino-acid sequence, 185 residues long: Elongation factor P (185 aa).

Belongs to the elongation factor P family.

It localises to the cytoplasm. It participates in protein biosynthesis; polypeptide chain elongation. Involved in peptide bond synthesis. Stimulates efficient translation and peptide-bond synthesis on native or reconstituted 70S ribosomes in vitro. Probably functions indirectly by altering the affinity of the ribosome for aminoacyl-tRNA, thus increasing their reactivity as acceptors for peptidyl transferase. This is Elongation factor P from Synechococcus sp. (strain JA-2-3B'a(2-13)) (Cyanobacteria bacterium Yellowstone B-Prime).